Here is a 359-residue protein sequence, read N- to C-terminus: Pyruvate dehydrogenase E1 component subunit beta, mitochondrial (359 aa).

The N-terminal 19 residues, 1–19 (MLGVIRNKTIRPSFSAFRF), are a transit peptide targeting the mitochondrion. A thiamine diphosphate-binding site is contributed by Glu82. The K(+) site is built by Ile135, Ala183, Ile184, and Asp186.

In terms of assembly, tetramer of 2 alpha and 2 beta subunits. Thiamine diphosphate serves as cofactor.

It localises to the mitochondrion matrix. It catalyses the reaction N(6)-[(R)-lipoyl]-L-lysyl-[protein] + pyruvate + H(+) = N(6)-[(R)-S(8)-acetyldihydrolipoyl]-L-lysyl-[protein] + CO2. The pyruvate dehydrogenase complex catalyzes the overall conversion of pyruvate to acetyl-CoA and CO(2). It contains multiple copies of three enzymatic components: pyruvate dehydrogenase (E1), dihydrolipoamide acetyltransferase (E2) and lipoamide dehydrogenase (E3). The polypeptide is Pyruvate dehydrogenase E1 component subunit beta, mitochondrial (Pisum sativum (Garden pea)).